The sequence spans 350 residues: Quinolinate phosphoribosyltransferase [decarboxylating] 1b (350 aa).

Residues Arg141, 172-174 (TRK), Arg196, Lys206, Glu239, Asp266, 298-300 (SGN), and 319-321 (SGA) contribute to the substrate site.

Belongs to the NadC/ModD family.

It carries out the reaction nicotinate beta-D-ribonucleotide + CO2 + diphosphate = quinolinate + 5-phospho-alpha-D-ribose 1-diphosphate + 2 H(+). Its pathway is alkaloid biosynthesis; nicotine biosynthesis. It functions in the pathway cofactor biosynthesis; NAD(+) biosynthesis; nicotinate D-ribonucleotide from quinolinate: step 1/1. Functionally, involved in the biosynthesis of pyridine alkaloid natural products, leading mainly to the production of anabasine, anatabine, nicotine and nornicotine, effective deterrents against herbivores with antiparasitic and pesticide properties (neurotoxins); nornicotine serves as the precursor in the synthesis of the carcinogen compound N'-nitrosonornicotine (NNN). Involved in the catabolism of quinolinic acid (QA). This is Quinolinate phosphoribosyltransferase [decarboxylating] 1b from Nicotiana tabacum (Common tobacco).